Consider the following 36-residue polypeptide: Dolichyl-diphosphooligosaccharide--protein glycosyltransferase subunit 2 (36 aa).

The protein belongs to the SWP1 family. In terms of assembly, component of the oligosaccharyltransferase (OST) complex.

The protein resides in the endoplasmic reticulum. Its subcellular location is the endoplasmic reticulum membrane. The protein operates within protein modification; protein glycosylation. Subunit of the oligosaccharyl transferase (OST) complex that catalyzes the initial transfer of a defined glycan (Glc(3)Man(9)GlcNAc(2) in eukaryotes) from the lipid carrier dolichol-pyrophosphate to an asparagine residue within an Asn-X-Ser/Thr consensus motif in nascent polypeptide chains, the first step in protein N-glycosylation. N-glycosylation occurs cotranslationally and the complex associates with the Sec61 complex at the channel-forming translocon complex that mediates protein translocation across the endoplasmic reticulum (ER). All subunits are required for a maximal enzyme activity. The polypeptide is Dolichyl-diphosphooligosaccharide--protein glycosyltransferase subunit 2 (Gallus gallus (Chicken)).